A 146-amino-acid chain; its full sequence is MKLFELQPAPGSKKLPKRKGRGHGTGNGKTAGRGHKGQNARSGGGVRPGFEGGQMPLYRRVPKRGFTNIFSKVYTEVNVSALNAFDDGTVVTQELLKEKGIIKKINDGVVILGNGELKKKLTVKAARFSKTAAEKIEAAGGKVEVI.

Positions 1 to 57 (MKLFELQPAPGSKKLPKRKGRGHGTGNGKTAGRGHKGQNARSGGGVRPGFEGGQMPL) are disordered. The span at 42–52 (SGGGVRPGFEG) shows a compositional bias: gly residues.

It belongs to the universal ribosomal protein uL15 family. In terms of assembly, part of the 50S ribosomal subunit.

Functionally, binds to the 23S rRNA. This is Large ribosomal subunit protein uL15 from Acetivibrio thermocellus (strain ATCC 27405 / DSM 1237 / JCM 9322 / NBRC 103400 / NCIMB 10682 / NRRL B-4536 / VPI 7372) (Clostridium thermocellum).